Reading from the N-terminus, the 76-residue chain is Dolichyl-diphosphooligosaccharide--protein glycosyltransferase subunit OST5 (76 aa).

A run of 2 helical transmembrane segments spans residues 14–34 (FYPV…ATFI) and 54–74 (ALIA…AGGI).

Belongs to the OST5 family. As to quaternary structure, component of the oligosaccharyltransferase (OST) complex.

The protein localises to the membrane. Functionally, subunit of the oligosaccharyl transferase (OST) complex that catalyzes the initial transfer of a defined glycan (Glc(3)Man(9)GlcNAc(2) in eukaryotes) from the lipid carrier dolichol-pyrophosphate to an asparagine residue within an Asn-X-Ser/Thr consensus motif in nascent polypeptide chains, the first step in protein N-glycosylation. N-glycosylation occurs cotranslationally and the complex associates with the Sec61 complex at the channel-forming translocon complex that mediates protein translocation across the endoplasmic reticulum (ER). All subunits are required for a maximal enzyme activity. This chain is Dolichyl-diphosphooligosaccharide--protein glycosyltransferase subunit OST5, found in Dictyostelium discoideum (Social amoeba).